Here is an 87-residue protein sequence, read N- to C-terminus: U3-theraphotoxin-Hhn1a 10 (87 aa).

Positions 1–24 are cleaved as a signal peptide; it reads MVNMEASMFLTFAGLVLLFVVCYA. Residues 25 to 52 constitute a propeptide that is removed on maturation; it reads SESEEKEFPKEMLSSIFAVDNDFKQEER. 3 disulfide bridges follow: Cys54-Cys67, Cys61-Cys72, and Cys66-Cys79.

Belongs to the neurotoxin 10 (Hwtx-1) family. 51 (Hntx-8) subfamily. Hntx-8 sub-subfamily. As to expression, expressed by the venom gland.

The protein localises to the secreted. Ion channel inhibitor. The protein is U3-theraphotoxin-Hhn1a 10 of Cyriopagopus hainanus (Chinese bird spider).